An 85-amino-acid polypeptide reads, in one-letter code: Senescence-associated and QQS-related protein (85 aa).

The span at 1 to 24 shows a compositional bias: basic and acidic residues; that stretch reads MSFRKVEKKPTEMGRNMTHEKSDS. 2 disordered regions span residues 1 to 35 and 55 to 85; these read MSFR…PMTV and SGKA…FPNY. Over residues 58-77 the composition is skewed to polar residues; sequence ARSNYNLTGTAKGTGPINSF.

As to expression, expressed predominantly within leaves and cotyledons vasculatures. Mainly observed in fully expanded leaves, at the base of mature inflorescences, in senescing leaves and cauline leaves, and, to a lower extent, in hypocotyls and rosette leaves prior to flowering.

Functionally, plays a role in carbon allocation, including during senescence and stresses, thus impacting starch accumulation. The chain is Senescence-associated and QQS-related protein from Arabidopsis thaliana (Mouse-ear cress).